Reading from the N-terminus, the 132-residue chain is MTRIRRGYIARRRRTKIRLFASSFRGAHSRLTRTITQQKIKALVSAHRDRDSKKRNFRRLWIIRINAIIRERVVEWALSYSYSRLIHDLYKRQLLLNRKILAQIAISNRNCLYMISNELYKYKEVEESSGII.

This sequence belongs to the bacterial ribosomal protein bL20 family.

The protein resides in the plastid. It localises to the chloroplast. Its function is as follows. Binds directly to 23S ribosomal RNA and is necessary for the in vitro assembly process of the 50S ribosomal subunit. It is not involved in the protein synthesizing functions of that subunit. The protein is Large ribosomal subunit protein bL20c of Coffea arabica (Arabian coffee).